Consider the following 212-residue polypeptide: Large ribosomal subunit protein uL1 (212 aa).

This sequence belongs to the universal ribosomal protein uL1 family. As to quaternary structure, part of the 50S ribosomal subunit.

Its function is as follows. Binds directly to 23S rRNA. Probably involved in E site tRNA release. Functionally, protein L1 is also a translational repressor protein, it controls the translation of its operon by binding to its mRNA. The protein is Large ribosomal subunit protein uL1 of Halobacterium salinarum (strain ATCC 29341 / DSM 671 / R1).